An 84-amino-acid polypeptide reads, in one-letter code: Translational regulator CsrA (84 aa).

This sequence belongs to the CsrA/RsmA family. Homodimer; the beta-strands of each monomer intercalate to form a hydrophobic core, while the alpha-helices form wings that extend away from the core.

It is found in the cytoplasm. In terms of biological role, a translational regulator that binds mRNA to regulate translation initiation and/or mRNA stability. Usually binds in the 5'-UTR at or near the Shine-Dalgarno sequence preventing ribosome-binding, thus repressing translation. Its main target seems to be the major flagellin gene, while its function is anatagonized by FliW. The chain is Translational regulator CsrA from Leptospira borgpetersenii serovar Hardjo-bovis (strain JB197).